The following is a 249-amino-acid chain: UDP-2,3-diacylglucosamine hydrolase (249 aa).

Aspartate 7, histidine 9, aspartate 40, asparagine 78, and histidine 113 together coordinate Mn(2+). A substrate-binding site is contributed by 78–79; the sequence is NR. Substrate is bound by residues aspartate 121, serine 159, threonine 163, lysine 166, and histidine 194. Histidine 194 and histidine 196 together coordinate Mn(2+).

This sequence belongs to the LpxH family. Mn(2+) serves as cofactor.

It is found in the cell inner membrane. The enzyme catalyses UDP-2-N,3-O-bis[(3R)-3-hydroxytetradecanoyl]-alpha-D-glucosamine + H2O = 2-N,3-O-bis[(3R)-3-hydroxytetradecanoyl]-alpha-D-glucosaminyl 1-phosphate + UMP + 2 H(+). Its pathway is glycolipid biosynthesis; lipid IV(A) biosynthesis; lipid IV(A) from (3R)-3-hydroxytetradecanoyl-[acyl-carrier-protein] and UDP-N-acetyl-alpha-D-glucosamine: step 4/6. Its function is as follows. Hydrolyzes the pyrophosphate bond of UDP-2,3-diacylglucosamine to yield 2,3-diacylglucosamine 1-phosphate (lipid X) and UMP by catalyzing the attack of water at the alpha-P atom. Involved in the biosynthesis of lipid A, a phosphorylated glycolipid that anchors the lipopolysaccharide to the outer membrane of the cell. The sequence is that of UDP-2,3-diacylglucosamine hydrolase from Pseudomonas fluorescens (strain SBW25).